We begin with the raw amino-acid sequence, 513 residues long: t-SNARE domain-containing protein 1 (513 aa).

2 disordered regions span residues 1-23 (MSYG…GPSR) and 49-128 (ESKL…KPNF). Positions 7 to 19 (ARGGGLGSRGPFG) are enriched in gly residues. S378 carries the post-translational modification Phosphoserine. The region spanning 416–478 (LEAIRLREEA…EAARQLLAGA (63 aa)) is the t-SNARE coiled-coil homology domain. Residues 491 to 511 (CFLSAGVTALLVIIIIIATSV) form a helical membrane-spanning segment.

It localises to the membrane. The chain is t-SNARE domain-containing protein 1 (TSNARE1) from Homo sapiens (Human).